The primary structure comprises 577 residues: Mitochondrial-processing peptidase subunit alpha (577 aa).

A mitochondrion-targeting transit peptide spans 1–35 (MLNRFRPARLVAQSSRCLPLTRARAGPLPVNNART). Residues 259-301 (SDAPGLSRTGSETSVDSLVSESSEASSESSSSSSDSSESSGGL) form a disordered region. A compositionally biased stretch (low complexity) spans 269–301 (SETSVDSLVSESSEASSESSSSSSDSSESSGGL).

The protein belongs to the peptidase M16 family. Heterodimer of mpp (alpha) and pep (beta) subunits, forming the mitochondrial processing protease (MPP) in which mpp is involved in substrate recognition and binding and pep is the catalytic subunit.

It is found in the mitochondrion matrix. Its function is as follows. Substrate recognition and binding subunit of the essential mitochondrial processing protease (MPP), which cleaves the mitochondrial sequence off newly imported precursors proteins. This is Mitochondrial-processing peptidase subunit alpha from Neurospora crassa (strain ATCC 24698 / 74-OR23-1A / CBS 708.71 / DSM 1257 / FGSC 987).